The chain runs to 225 residues: Phosphatidylserine decarboxylase proenzyme (225 aa).

Ser-189 functions as the Schiff-base intermediate with substrate; via pyruvic acid in the catalytic mechanism. The residue at position 189 (Ser-189) is a Pyruvic acid (Ser); by autocatalysis.

Belongs to the phosphatidylserine decarboxylase family. PSD-A subfamily. As to quaternary structure, heterodimer of a large membrane-associated beta subunit and a small pyruvoyl-containing alpha subunit. Requires pyruvate as cofactor. Post-translationally, is synthesized initially as an inactive proenzyme. Formation of the active enzyme involves a self-maturation process in which the active site pyruvoyl group is generated from an internal serine residue via an autocatalytic post-translational modification. Two non-identical subunits are generated from the proenzyme in this reaction, and the pyruvate is formed at the N-terminus of the alpha chain, which is derived from the carboxyl end of the proenzyme. The post-translation cleavage follows an unusual pathway, termed non-hydrolytic serinolysis, in which the side chain hydroxyl group of the serine supplies its oxygen atom to form the C-terminus of the beta chain, while the remainder of the serine residue undergoes an oxidative deamination to produce ammonia and the pyruvoyl prosthetic group on the alpha chain.

The protein localises to the cell membrane. The catalysed reaction is a 1,2-diacyl-sn-glycero-3-phospho-L-serine + H(+) = a 1,2-diacyl-sn-glycero-3-phosphoethanolamine + CO2. It functions in the pathway phospholipid metabolism; phosphatidylethanolamine biosynthesis; phosphatidylethanolamine from CDP-diacylglycerol: step 2/2. Its function is as follows. Catalyzes the formation of phosphatidylethanolamine (PtdEtn) from phosphatidylserine (PtdSer). This is Phosphatidylserine decarboxylase proenzyme from Amoebophilus asiaticus (strain 5a2).